The primary structure comprises 90 residues: C-C motif chemokine 4 homolog (90 aa).

The signal sequence occupies residues 1-21; it reads MKVSVAALAVLLIAICYQTSA. 2 disulfide bridges follow: C32–C56 and C33–C72.

It belongs to the intercrine beta (chemokine CC) family. In terms of assembly, homodimer.

It is found in the secreted. Its function is as follows. Monokine with inflammatory and chemokinetic properties. This is C-C motif chemokine 4 homolog (CCL4) from Gallus gallus (Chicken).